The following is a 195-amino-acid chain: Putative inactive carbonic anhydrase 5B-like protein (195 aa).

121–122 (TT) serves as a coordination point for substrate.

This sequence belongs to the alpha-carbonic anhydrase family.

This chain is Putative inactive carbonic anhydrase 5B-like protein (CA5BP1), found in Homo sapiens (Human).